The following is a 98-amino-acid chain: NADH-ubiquinone oxidoreductase chain 4L (98 aa).

The next 3 membrane-spanning stretches (helical) occupy residues 1–21, 26–46, and 59–79; these read MTPTHFTISSAFLLGMMGLAF, LLSALLCLEAMMLALFIALSL, and APMLMLAFSACEASAGLALLV.

Belongs to the complex I subunit 4L family.

The protein resides in the mitochondrion membrane. The catalysed reaction is a ubiquinone + NADH + 5 H(+)(in) = a ubiquinol + NAD(+) + 4 H(+)(out). Its function is as follows. Core subunit of the mitochondrial membrane respiratory chain NADH dehydrogenase (Complex I) which catalyzes electron transfer from NADH through the respiratory chain, using ubiquinone as an electron acceptor. Part of the enzyme membrane arm which is embedded in the lipid bilayer and involved in proton translocation. In Gadus morhua (Atlantic cod), this protein is NADH-ubiquinone oxidoreductase chain 4L (MT-ND4L).